The sequence spans 337 residues: Transcription initiation factor IIB (337 aa).

The TFIIB-type zinc-finger motif lies at 36-68; the sequence is SVQSVCPECGSRQLVHDYERAELVCQNCGLVLD. The Zn(2+) site is built by Cys-41, Cys-44, Cys-60, and Cys-63. A run of 2 repeats spans residues 154 to 237 and 248 to 329.

Belongs to the TFIIB family.

In terms of biological role, stabilizes TBP binding to an archaeal box-A promoter. Also responsible for recruiting RNA polymerase II to the pre-initiation complex (DNA-TBP-TFIIB). The polypeptide is Transcription initiation factor IIB (Methanoculleus marisnigri (strain ATCC 35101 / DSM 1498 / JR1)).